A 123-amino-acid polypeptide reads, in one-letter code: Guanine nucleotide exchange factor MSS4 (123 aa).

Met1 carries the N-acetylmethionine modification. Positions 9–123 constitute an MSS4 domain; that stretch reads ELVSAEGRNR…YVALERVSHE (115 aa). 4 residues coordinate Zn(2+): Cys23, Cys26, Cys94, and Cys97.

Belongs to the DSS4/MSS4 family. In terms of assembly, interacts with RAB8A. In terms of tissue distribution, ubiquitous.

Guanine-nucleotide-releasing protein that acts on members of the SEC4/YPT1/RAB subfamily. Stimulates GDP release from both YPT1, RAB3A and RAB10, but is less active on these proteins than on the SEC4 protein. Might play a general role in vesicular transport. The polypeptide is Guanine nucleotide exchange factor MSS4 (Rabif) (Rattus norvegicus (Rat)).